The chain runs to 158 residues: Cytochrome c-type biogenesis protein CcmE (158 aa).

Positions 1 to 11 (MTRPDSGSSPA) are enriched in polar residues. The disordered stretch occupies residues 1–20 (MTRPDSGSSPAPLSEARRRK). Over 1-23 (MTRPDSGSSPAPLSEARRRKRNP) the chain is Cytoplasmic. A helical; Signal-anchor for type II membrane protein transmembrane segment spans residues 24-44 (LPTVLGITALLGLAGFIAFGN). The Extracellular portion of the chain corresponds to 45 to 158 (LNKSLEYFVT…ELRDLLEQSE (114 aa)). 2 residues coordinate heme: His137 and Tyr141.

It belongs to the CcmE/CycJ family.

It is found in the cell membrane. Its function is as follows. Heme chaperone required for the biogenesis of c-type cytochromes. Transiently binds heme delivered by CcmC and transfers the heme to apo-cytochromes in a process facilitated by CcmF and CcmH. The sequence is that of Cytochrome c-type biogenesis protein CcmE from Deinococcus deserti (strain DSM 17065 / CIP 109153 / LMG 22923 / VCD115).